A 59-amino-acid polypeptide reads, in one-letter code: U-limacoditoxin(3)-Dv33 (59 aa).

The signal sequence occupies residues 1–19; it reads MSKVILLCLIFALFACSIS.

Belongs to the limacoditoxin-3 family. The natural peptide is not amidated. The recombinant peptide is amidated. Expressed by the venom secretory cell of the spine. The spine is a cuticular structure containing a single large nucleated venom-secreting cell at its base. It is an independent unit capable of producing, storing and injecting venom. On the back of D.vulnerans caterpillars, spines are grouped together by 50 to 100 to form scoli, of which there are eight in D.vulnerans.

The protein resides in the secreted. Its function is as follows. Probable toxin. Shows a relatively potent antiparasitic activity against the major pathogenic nematode of ruminants (H.contortus, EC(50)=2.6 uM). Does not show insecticidal and antimicrobial activities. Does not induce increase in intracellular calcium in mouse DRG neurons, suggesting that it does not induce pain. This Doratifera vulnerans (Mottled cup moth) protein is U-limacoditoxin(3)-Dv33.